We begin with the raw amino-acid sequence, 346 residues long: Glucose-6-phosphatase 3 (346 aa).

Over 1 to 24 (MESTLGAGIAMAEALQNQLPWLEN) the chain is Lumenal. The helical transmembrane segment at 25 to 45 (VWLWVTFLGDPKSLFLFYFPA) threads the bilayer. Residues 46–54 (AYYASRRVG) lie on the Cytoplasmic side of the membrane. A helical transmembrane segment spans residues 55-75 (IAVLWISLITEWLNLVFKWFL). Residues 76 to 108 (FGDRPFWWVHESGYYSQAPAQVHQFPSSCETGP) are Lumenal-facing. Arginine 79 provides a ligand contact to substrate. A helical transmembrane segment spans residues 109–129 (GSPSGHCMITGAALWPIMTAV). The active-site Proton donor is histidine 114. Residues 130–140 (SSQMATRAHSR) are Cytoplasmic-facing. A helical transmembrane segment spans residues 141 to 162 (WVRVIPSLAYCTFLLAVGLSRV). Arginine 161 is a binding site for substrate. At 163–167 (FLLAH) the chain is on the lumenal side. The active-site Nucleophile is the histidine 167. The helical transmembrane segment at 168 to 186 (FPHQVLAGLITGAVLGWLM) threads the bilayer. Topologically, residues 187–197 (TPQVPMERELS) are cytoplasmic. A helical membrane pass occupies residues 198–218 (FYGLTSLALLLGASLIYWTLF). Residues 219 to 254 (TLGLDLSWSINLASKWCERPEWVHLDSRPFASLSRD) lie on the Lumenal side of the membrane. Residues 255 to 273 (SGAALGLGIALHSPCYAQV) traverse the membrane as a helical segment. Residues 274–283 (RRAHLGYGQK) are Cytoplasmic-facing. The chain crosses the membrane as a helical span at residues 284–304 (LVCLVLAMGLLGPLNWLGYPP). Over 305 to 307 (QIS) the chain is Lumenal. A helical transmembrane segment spans residues 308-328 (LFYIFNFLKYTLWPCLVLALV). Topologically, residues 329–346 (PWLVHMFSAQEAPPIRSS) are cytoplasmic.

This sequence belongs to the glucose-6-phosphatase family.

The protein localises to the endoplasmic reticulum membrane. The enzyme catalyses D-glucose 6-phosphate + H2O = D-glucose + phosphate. The protein operates within carbohydrate biosynthesis; gluconeogenesis. Inhibited by vanadate. Hydrolyzes glucose-6-phosphate to glucose in the endoplasmic reticulum. May form with the glucose-6-phosphate transporter (SLC37A4/G6PT) a ubiquitously expressed complex responsible for glucose production through glycogenolysis and gluconeogenesis. Probably required for normal neutrophil function. The protein is Glucose-6-phosphatase 3 (G6PC3) of Bos taurus (Bovine).